We begin with the raw amino-acid sequence, 440 residues long: Tubby-like F-box protein 13 (440 aa).

One can recognise an F-box domain in the interval 51–106; it reads SCWASLPPELLRDIIERLEESEATWPSRKHVVACAGVCRTWREMCKEIVKNPELCG.

Belongs to the TUB family. In terms of tissue distribution, ubiquitous.

The sequence is that of Tubby-like F-box protein 13 (TULP13) from Oryza sativa subsp. japonica (Rice).